The following is a 138-amino-acid chain: uncharacterized protein (138 aa).

This is an uncharacterized protein from Methanocaldococcus jannaschii (strain ATCC 43067 / DSM 2661 / JAL-1 / JCM 10045 / NBRC 100440) (Methanococcus jannaschii).